The sequence spans 549 residues: MLENYKNLATVGYQLFKPSLISWLEQEESRTVQRGDFQASEWKVQLKTKELALQQDVLGEPTSSGIQMIGSHNGGEVSDVKQCGDVSSEHSCLKTHVRTQNSENTFECYLYGVDFLTLHKKTSTGEQRSVFSQCGKAFSLNPDVVCQRTCTGEKAFDCSDSGKSFINHSHLQGHLRTHNGESLHEWKECGRGFIHSTDLAVRIQTHRSEKPYKCKECGKGFRYSAYLNIHMGTHTGDNPYECKECGKAFTRSCQLTQHRKTHTGEKPYKCKDCGRAFTVSSCLSQHMKIHVGEKPYECKECGIAFTRSSQLTEHLKTHTAKDPFECKICGKSFRNSSCLSDHFRIHTGIKPYKCKDCGKAFTQNSDLTKHARTHSGERPYECKECGKAFARSSRLSEHTRTHTGEKPFECVKCGKAFAISSNLSGHLRIHTGEKPFECLECGKAFTHSSSLNNHMRTHSAKKPFTCMECGKAFKFPTCVNLHMRIHTGEKPYKCKQCGKSFSYSNSFQLHERTHTGEKPYECKECGKAFSSSSSFRNHERRHADERLSA.

One can recognise a KRAB domain in the interval 1–42; sequence MLENYKNLATVGYQLFKPSLISWLEQEESRTVQRGDFQASEW. The C2H2-type 1; degenerate zinc-finger motif lies at 156-178; the sequence is FDCSDSGKSFINHSHLQGHLRTH. Residues 184-206 form a C2H2-type 2; degenerate zinc finger; the sequence is HEWKECGRGFIHSTDLAVRIQTH. C2H2-type zinc fingers lie at residues 212–234, 240–262, 268–290, 296–318, 324–346, 352–374, 380–402, 408–430, 436–458, 464–486, 492–514, and 520–542; these read YKCK…MGTH, YECK…RKTH, YKCK…MKIH, YECK…LKTH, FECK…FRIH, YKCK…ARTH, YECK…TRTH, FECV…LRIH, FECL…MRTH, FTCM…MRIH, YKCK…ERTH, and YECK…ERRH. Residues 530 to 549 form a disordered region; the sequence is SSSSSFRNHERRHADERLSA.

This sequence belongs to the krueppel C2H2-type zinc-finger protein family.

The protein localises to the nucleus. Functionally, may be involved in transcriptional regulation. The sequence is that of Zinc finger protein 266 (ZNF266) from Homo sapiens (Human).